We begin with the raw amino-acid sequence, 240 residues long: uncharacterized protein (240 aa).

Disordered regions lie at residues 125–148 and 177–240; these read RRLDFSSEDGEEEEENDYIDEDVD and DESN…RKSR. Positions 130 to 148 are enriched in acidic residues; that stretch reads SSEDGEEEEENDYIDEDVD. A compositionally biased stretch (basic and acidic residues) spans 192–203; it reads SPRKSHIDHDFV. A compositionally biased stretch (acidic residues) spans 204 to 217; it reads IPEDEMLSEEEEQE. Residue serine 231 is modified to Phosphoserine.

This sequence belongs to the UTP5 family.

It is found in the cytoplasm. The protein localises to the nucleus. This is an uncharacterized protein from Schizosaccharomyces pombe (strain 972 / ATCC 24843) (Fission yeast).